A 331-amino-acid polypeptide reads, in one-letter code: 3'-5' exonuclease (331 aa).

Residues 27–92 (ERVKQTNAAK…EDGPASPEKE (66 aa)) are disordered. A compositionally biased stretch (polar residues) spans 31 to 43 (QTNAAKKQIATNN). The span at 47-67 (KNQDTPEMIKDKENAESENPP) shows a compositional bias: basic and acidic residues. 2 positions are modified to phosphoserine: Ser80 and Ser88. The 173-residue stretch at 118-290 (SADEVMQWVE…IGQVIYREIE (173 aa)) folds into the 3'-5' exonuclease domain. 3 residues coordinate Mg(2+): Asp140, Glu142, and Asp278.

It belongs to the WRNexo family.

The protein localises to the nucleus. Its function is as follows. Has exonuclease activity on both single-stranded and duplex templates bearing overhangs, but not blunt ended duplex DNA, and cleaves in a 3'-5' direction. Essential for the formation of DNA replication focal centers. Has an important role in maintaining genome stability. The chain is 3'-5' exonuclease from Drosophila grimshawi (Hawaiian fruit fly).